Reading from the N-terminus, the 450-residue chain is Phosphoglucosamine mutase (450 aa).

S102 functions as the Phosphoserine intermediate in the catalytic mechanism. Mg(2+)-binding residues include S102, D244, D246, and D248. The residue at position 102 (S102) is a Phosphoserine.

The protein belongs to the phosphohexose mutase family. The cofactor is Mg(2+). In terms of processing, activated by phosphorylation.

It catalyses the reaction alpha-D-glucosamine 1-phosphate = D-glucosamine 6-phosphate. Catalyzes the conversion of glucosamine-6-phosphate to glucosamine-1-phosphate. This chain is Phosphoglucosamine mutase, found in Nitratidesulfovibrio vulgaris (strain DSM 19637 / Miyazaki F) (Desulfovibrio vulgaris).